The following is a 620-amino-acid chain: UPF0313 protein BT_0254 (620 aa).

The 281-residue stretch at 311-591 (AYDMIKFSVN…AQRQFFFWYK (281 aa)) folds into the Radical SAM core domain. [4Fe-4S] cluster-binding residues include Cys325, Cys329, and Cys332.

This sequence belongs to the UPF0313 family. Requires [4Fe-4S] cluster as cofactor.

The polypeptide is UPF0313 protein BT_0254 (Bacteroides thetaiotaomicron (strain ATCC 29148 / DSM 2079 / JCM 5827 / CCUG 10774 / NCTC 10582 / VPI-5482 / E50)).